The following is a 428-amino-acid chain: Adenylosuccinate synthetase (428 aa).

Residues 11–17 and 39–41 each bind GTP; these read GDEGKGK and GHT. The Proton acceptor role is filled by Asp-12. Asp-12 and Gly-39 together coordinate Mg(2+). IMP contacts are provided by residues 12-15, 37-40, Thr-130, Arg-144, Asn-226, Thr-241, and Arg-305; these read DEGK and NAGH. His-40 (proton donor) is an active-site residue. 301 to 307 is a binding site for substrate; the sequence is VTTGRKR. GTP contacts are provided by residues Arg-307, 333-335, and 415-417; these read KLD and GTG.

This sequence belongs to the adenylosuccinate synthetase family. Homodimer. Requires Mg(2+) as cofactor.

Its subcellular location is the cytoplasm. It catalyses the reaction IMP + L-aspartate + GTP = N(6)-(1,2-dicarboxyethyl)-AMP + GDP + phosphate + 2 H(+). The protein operates within purine metabolism; AMP biosynthesis via de novo pathway; AMP from IMP: step 1/2. In terms of biological role, plays an important role in the de novo pathway and in the salvage pathway of purine nucleotide biosynthesis. Catalyzes the first committed step in the biosynthesis of AMP from IMP. This Candida dubliniensis (strain CD36 / ATCC MYA-646 / CBS 7987 / NCPF 3949 / NRRL Y-17841) (Yeast) protein is Adenylosuccinate synthetase.